The following is a 163-amino-acid chain: Phosphopantetheine adenylyltransferase (163 aa).

Thr9 provides a ligand contact to substrate. ATP contacts are provided by residues 9–10 (TF) and His17. The substrate site is built by Lys41, Leu76, and Arg90. ATP-binding positions include 91-93 (GLR), Glu101, and 126-132 (HQAIASR).

This sequence belongs to the bacterial CoaD family. In terms of assembly, homohexamer. Requires Mg(2+) as cofactor.

The protein resides in the cytoplasm. The enzyme catalyses (R)-4'-phosphopantetheine + ATP + H(+) = 3'-dephospho-CoA + diphosphate. It functions in the pathway cofactor biosynthesis; coenzyme A biosynthesis; CoA from (R)-pantothenate: step 4/5. Its function is as follows. Reversibly transfers an adenylyl group from ATP to 4'-phosphopantetheine, yielding dephospho-CoA (dPCoA) and pyrophosphate. The polypeptide is Phosphopantetheine adenylyltransferase (Caulobacter vibrioides (strain ATCC 19089 / CIP 103742 / CB 15) (Caulobacter crescentus)).